Reading from the N-terminus, the 343-residue chain is Anthranilate phosphoribosyltransferase (343 aa).

5-phospho-alpha-D-ribose 1-diphosphate contacts are provided by residues glycine 78, 81–82 (GD), threonine 86, 88–91 (NIST), 106–114 (KHGNRSVSS), and serine 118. Anthranilate is bound at residue glycine 78. Serine 90 provides a ligand contact to Mg(2+). Position 109 (asparagine 109) interacts with anthranilate. Arginine 164 contacts anthranilate. Residues aspartate 223 and glutamate 224 each coordinate Mg(2+).

This sequence belongs to the anthranilate phosphoribosyltransferase family. As to quaternary structure, homodimer. Mg(2+) is required as a cofactor.

The catalysed reaction is N-(5-phospho-beta-D-ribosyl)anthranilate + diphosphate = 5-phospho-alpha-D-ribose 1-diphosphate + anthranilate. It functions in the pathway amino-acid biosynthesis; L-tryptophan biosynthesis; L-tryptophan from chorismate: step 2/5. Functionally, catalyzes the transfer of the phosphoribosyl group of 5-phosphorylribose-1-pyrophosphate (PRPP) to anthranilate to yield N-(5'-phosphoribosyl)-anthranilate (PRA). The chain is Anthranilate phosphoribosyltransferase from Chlamydia felis (strain Fe/C-56) (Chlamydophila felis).